Reading from the N-terminus, the 371-residue chain is Queuine tRNA-ribosyltransferase (371 aa).

Asp90 (proton acceptor) is an active-site residue. Residues 90 to 94 (DSGGF), Asp144, Gln185, and Gly212 contribute to the substrate site. Positions 243 to 249 (GVGTPED) are RNA binding. The active-site Nucleophile is the Asp262. Positions 267–271 (TRNAR) are RNA binding; important for wobble base 34 recognition. Residues Cys300, Cys302, Cys305, and His331 each coordinate Zn(2+).

Belongs to the queuine tRNA-ribosyltransferase family. As to quaternary structure, homodimer. Within each dimer, one monomer is responsible for RNA recognition and catalysis, while the other monomer binds to the replacement base PreQ1. Zn(2+) is required as a cofactor.

The enzyme catalyses 7-aminomethyl-7-carbaguanine + guanosine(34) in tRNA = 7-aminomethyl-7-carbaguanosine(34) in tRNA + guanine. The protein operates within tRNA modification; tRNA-queuosine biosynthesis. Functionally, catalyzes the base-exchange of a guanine (G) residue with the queuine precursor 7-aminomethyl-7-deazaguanine (PreQ1) at position 34 (anticodon wobble position) in tRNAs with GU(N) anticodons (tRNA-Asp, -Asn, -His and -Tyr). Catalysis occurs through a double-displacement mechanism. The nucleophile active site attacks the C1' of nucleotide 34 to detach the guanine base from the RNA, forming a covalent enzyme-RNA intermediate. The proton acceptor active site deprotonates the incoming PreQ1, allowing a nucleophilic attack on the C1' of the ribose to form the product. After dissociation, two additional enzymatic reactions on the tRNA convert PreQ1 to queuine (Q), resulting in the hypermodified nucleoside queuosine (7-(((4,5-cis-dihydroxy-2-cyclopenten-1-yl)amino)methyl)-7-deazaguanosine). The chain is Queuine tRNA-ribosyltransferase from Acidithiobacillus ferrooxidans (strain ATCC 23270 / DSM 14882 / CIP 104768 / NCIMB 8455) (Ferrobacillus ferrooxidans (strain ATCC 23270)).